A 678-amino-acid polypeptide reads, in one-letter code: ATP-dependent RNA helicase DHX58 (678 aa).

The Helicase ATP-binding domain maps to 11 to 188; sequence ILPALEGKNI…QGAIDHILQL (178 aa). 24 to 31 is a binding site for ATP; sequence LPTGAGKT. A DECH box motif is present at residues 131 to 134; the sequence is DECH. The region spanning 353-514 is the Helicase C-terminal domain; the sequence is MLERILLKQF…KAVAAVQKMD (162 aa). Residues 489–546 are a coiled coil; that stretch reads EMKRELTNEALEVLMEKAVAAVQKMDPDEFKAKIRDLQQASLVKRAARAAHREIQQGQ. Residues 542-669 enclose the RLR CTR domain; the sequence is IQQGQFLPEH…PVFDILQDCT (128 aa). The Zn(2+) site is built by Cys556, Cys559, Cys612, and Cys615. The segment at 572-655 is RNA-binding; that stretch reads VEGTHHVNVN…KIQAKKWSRV (84 aa).

This sequence belongs to the helicase family. RLR subfamily. In terms of assembly, monomer in the absence of dsRNA. Homodimer in the presence of dsRNA. Interacts with RIGI (via CARD domain), MAVS/IPS1 and DDX60. Found in a complex with RIGI and IFIH1/MDA5. Interacts with ANKRD17. Directly interacts with ATG5 and ATG12, either as ATG5 and ATG12 monomers or as ATG12-ATG5 conjugates. As to expression, highly expressed in mammary tissues. Expressed in liver and testis. Expressed at lower level in spleen, embryo, mammary gland and breast tumors.

It is found in the cytoplasm. The catalysed reaction is ATP + H2O = ADP + phosphate + H(+). Functionally, acts as a regulator of RIGI and IFIH1/MDA5 mediated antiviral signaling. Cannot initiate antiviral signaling as it lacks the CARD domain required for activating MAVS/IPS1-dependent signaling events. Can have both negative and positive regulatory functions related to RIGI and IFIH1/MDA5 signaling and this role in regulating signaling may be complex and could probably depend on characteristics of the infecting virus or target cells, or both. Its inhibitory action on RIG-I signaling may involve the following mechanisms: competition with RIGI for binding to the viral RNA, binding to RIGI and inhibiting its dimerization and interaction with MAVS/IPS1, competing with IKBKE in its binding to MAVS/IPS1 thereby inhibiting activation of interferon regulatory factor 3 (IRF3). Its positive regulatory role may involve unwinding or stripping nucleoproteins of viral RNA thereby facilitating their recognition by RIGI and IFIH1/MDA5. Involved in the innate immune response to various RNA viruses and some DNA viruses such as poxviruses, and also to the bacterial pathogen Listeria monocytogenes. Can bind both ssRNA and dsRNA, with a higher affinity for dsRNA. Shows a preference to 5'-triphosphorylated RNA, although it can recognize RNA lacking a 5'-triphosphate. This Mus musculus (Mouse) protein is ATP-dependent RNA helicase DHX58.